Reading from the N-terminus, the 1527-residue chain is Peroxidasin (1527 aa).

The N-terminal stretch at 1 to 23 (MRFMLLMLQLLGLLLLLAGGVQS) is a signal peptide. The LRRNT domain occupies 24–53 (VYCPAGCTCLERTVRCIRAKLSAVPKLPQD). LRR repeat units follow at residues 51 to 74 (PQDT…AFSG), 75 to 98 (LAQL…ALNG), 99 to 122 (LTAL…IFQR), 124 to 146 (PRLE…LFDN), 147 to 170 (LPRL…GFNR), and 172 to 196 (NNLK…LWRR). Ig-like C2-type domains lie at 236 to 322 (PQFL…QPVR), 365 to 453 (PHFT…ARIE), 458 to 545 (PEIL…ATIK), and 553 to 643 (PQLA…ALVT). Cystine bridges form between Cys257/Cys307, Cys388/Cys437, Cys479/Cys529, and Cys574/Cys627. N-linked (GlcNAc...) asparagine glycosylation is present at Asn419. N-linked (GlcNAc...) asparagine glycosylation is found at Asn616, Asn673, Asn682, Asn731, and Asn767. A disulfide bond links Cys768 and Cys784. Asp862 is a binding site for heme b. The active-site Proton acceptor is the His863. Ca(2+) is bound at residue Asp864. 2 cysteine pairs are disulfide-bonded: Cys882-Cys892 and Cys886-Cys909. 4 residues coordinate Ca(2+): Thr941, Tyr943, Asp945, and Ser947. Asn962 is a glycosylation site (N-linked (GlcNAc...) asparagine). Cys994 and Cys1005 are joined by a disulfide. The heme b site is built by Glu1015 and His1109. Residues Asn1120 and Asn1213 are each glycosylated (N-linked (GlcNAc...) asparagine). 2 cysteine pairs are disulfide-bonded: Cys1212–Cys1269 and Cys1310–Cys1336. Residues 1403 to 1441 (NEERVSGLEELIGSFQKELKKLHKKLRKLEDSCNSADSE) adopt a coiled-coil conformation. One can recognise a VWFC domain in the interval 1463–1524 (SHCVDDKGTT…PPEACCPHCP (62 aa)).

It belongs to the peroxidase family. XPO subfamily. As to quaternary structure, homotrimer; disulfide-linked. Ca(2+) serves as cofactor. The cofactor is heme b. Expressed in hemocytes. Also expressed in the fat body and gastric caeca.

The protein localises to the secreted. It catalyses the reaction (5R)-5-hydroxy-L-lysyl-[collagen] + L-methionyl-[collagen] + H2O2 = [collagen]-(5R)-5-hydroxy-L-lysyl-N-S-L-methionyl-[collagen] + 2 H2O + H(+). It carries out the reaction bromide + H2O2 = hypobromite + H2O. The enzyme catalyses (5R)-5-hydroxy-L-lysyl-[collagen] + L-methionyl-[collagen] + hypobromite = [collagen]-(5R)-5-hydroxy-L-lysyl-N-S-L-methionyl-[collagen] + bromide + H2O + H(+). The catalysed reaction is L-lysyl-[collagen] + L-methionyl-[collagen] + H2O2 = [collagen]-L-lysyl-N-S-L-methionyl-[collagen] + 2 H2O + H(+). It catalyses the reaction L-lysyl-[collagen] + L-methionyl-[collagen] + hypobromite = [collagen]-L-lysyl-N-S-L-methionyl-[collagen] + bromide + H2O + H(+). It carries out the reaction L-tyrosyl-[protein] + bromide + H2O2 + H(+) = 3-bromo-L-tyrosyl-[protein] + 2 H2O. The enzyme catalyses hypobromite + L-tyrosyl-[protein] + H(+) = 3-bromo-L-tyrosyl-[protein] + H2O. Its function is as follows. Catalyzes the two-electron oxidation of bromide by hydrogen peroxide and generates hypobromite as a reactive intermediate which mediates the formation of sulfilimine cross-links between methionine and hydroxylysine residues within an uncross-linked collagen IV NC1 hexamer. Plays a role in extracellular matrix consolidation, phagocytosis and defense. The sequence is that of Peroxidasin from Drosophila melanogaster (Fruit fly).